The chain runs to 230 residues: MYSIKMRSSNQDVHISGAETICEFDKIEQTVQRFYNKGFFHENGQPDFLNIKIQKIMEPIQQIKALQIIEDDKANLQHLTQECGVTEQALNQGMTYIKNETVYTGAIILSAISGKRLDSFGQRGIRATHFSFEDINNKGDLNERVTDALAIASCINAHPYVKGELCVSDDLTYTTGYFASAKIGYHRLFDIKPVNTRYGGRIIFVDDRIDLNHYISFLESTPKQVVYERV.

It belongs to the BioW family. In terms of assembly, homodimer. It depends on Mg(2+) as a cofactor.

The enzyme catalyses heptanedioate + ATP + CoA = 6-carboxyhexanoyl-CoA + AMP + diphosphate. The protein operates within metabolic intermediate metabolism; pimeloyl-CoA biosynthesis; pimeloyl-CoA from pimelate: step 1/1. Its function is as follows. Catalyzes the transformation of pimelate into pimeloyl-CoA with concomitant hydrolysis of ATP to AMP. This is 6-carboxyhexanoate--CoA ligase from Staphylococcus aureus (strain MSSA476).